Consider the following 354-residue polypeptide: Ion-translocating oxidoreductase complex subunit D (354 aa).

4 consecutive transmembrane segments (helical) span residues 19 to 39 (IMLLVFCAAVPGICTEIYYFG), 40 to 60 (FGVLFQILLSVFFSVSFEFLV), 77 to 99 (AAVTGVLIGISLPSLSPWWLSFF), and 119 to 139 (IFNPAMTGYSILLVSFPILMT). An FMN phosphoryl threonine modification is found at T187. A run of 5 helical transmembrane segments spans residues 221–241 (WISINISFLIGGIVLLGFNVI), 245–265 (IPVSILFSLYVFFALDYYFFK), 268–288 (MYYPIMQLFFGSTMFSVFFIA), 295–315 (SITKIGRIVFGCIVGFLIWLI), and 319–339 (GNYPDAIAFSILLSNSIVPLI).

This sequence belongs to the NqrB/RnfD family. In terms of assembly, the complex is composed of six subunits: RnfA, RnfB, RnfC, RnfD, RnfE and RnfG. It depends on FMN as a cofactor.

The protein localises to the cell inner membrane. In terms of biological role, part of a membrane-bound complex that couples electron transfer with translocation of ions across the membrane. This is Ion-translocating oxidoreductase complex subunit D from Buchnera aphidicola subsp. Baizongia pistaciae (strain Bp).